A 319-amino-acid polypeptide reads, in one-letter code: Small ribosomal subunit protein RACK1 (319 aa).

Alanine 2 is modified (N-acetylalanine). WD repeat units lie at residues 15 to 55 (GHNG…QKFG), 63 to 102 (GHSH…TYQR), 105 to 145 (GHKS…ATLL), 147 to 191 (HNDW…IEAD), 194 to 233 (GHNS…AMYT), 235 to 275 (SAQD…DDLR), and 284 to 319 (AAEP…MTAN). Residues lysine 46 and lysine 53 each participate in a glycyl lysine isopeptide (Lys-Gly) (interchain with G-Cter in ubiquitin) cross-link. Threonine 96 carries the phosphothreonine modification. Glycyl lysine isopeptide (Lys-Gly) (interchain with G-Cter in ubiquitin) cross-links involve residues lysine 107, lysine 137, and lysine 161. The residue at position 168 (threonine 168) is a Phosphothreonine.

This sequence belongs to the WD repeat G protein beta family. Ribosomal protein RACK1 subfamily. As to quaternary structure, component of the small ribosomal subunit (SSU). Mature yeast ribosomes consist of a small (40S) and a large (60S) subunit. The 40S small subunit contains 1 molecule of ribosomal RNA (18S rRNA) and 33 different proteins (encoded by 57 genes). The large 60S subunit contains 3 rRNA molecules (25S, 5.8S and 5S rRNA) and 46 different proteins (encoded by 81 genes). RACK1 is located at the head of the SSU in the vicinity of the mRNA exit channel. RACK1 interacts with the mRNA-binding protein SCP16. RACK1 also exists simultaneously as a homodimer in a cytosolic non-ribosome-bound form.

The protein resides in the cytoplasm. In terms of biological role, component of the ribosome, a large ribonucleoprotein complex responsible for the synthesis of proteins in the cell. The small ribosomal subunit (SSU) binds messenger RNAs (mRNAs) and translates the encoded message by selecting cognate aminoacyl-transfer RNA (tRNA) molecules. The large subunit (LSU) contains the ribosomal catalytic site termed the peptidyl transferase center (PTC), which catalyzes the formation of peptide bonds, thereby polymerizing the amino acids delivered by tRNAs into a polypeptide chain. The nascent polypeptides leave the ribosome through a tunnel in the LSU and interact with protein factors that function in enzymatic processing, targeting, and the membrane insertion of nascent chains at the exit of the ribosomal tunnel. Located at the head of the 40S ribosomal subunit in the vicinity of the mRNA exit channel, RACK1 serves as a scaffold protein that can recruit other proteins to the ribosome. Involved in induction of the ribosome quality control (RQC) pathway; a pathway that degrades nascent peptide chains during problematic translation. Involved in the negative regulation of translation of a specific subset of proteins. The chain is Small ribosomal subunit protein RACK1 from Saccharomyces cerevisiae (strain ATCC 204508 / S288c) (Baker's yeast).